We begin with the raw amino-acid sequence, 423 residues long: Phosphoribosylamine--glycine ligase (423 aa).

An ATP-grasp domain is found at 107–312 (KDLCARYGIP…LLPLLYAAAT (206 aa)). 133–193 (IREEGAPIVI…EAYLDGEEAS (61 aa)) contributes to the ATP binding site. Glu282 and Asn284 together coordinate Mg(2+).

It belongs to the GARS family. It depends on Mg(2+) as a cofactor. Mn(2+) is required as a cofactor.

The catalysed reaction is 5-phospho-beta-D-ribosylamine + glycine + ATP = N(1)-(5-phospho-beta-D-ribosyl)glycinamide + ADP + phosphate + H(+). It functions in the pathway purine metabolism; IMP biosynthesis via de novo pathway; N(1)-(5-phospho-D-ribosyl)glycinamide from 5-phospho-alpha-D-ribose 1-diphosphate: step 2/2. The sequence is that of Phosphoribosylamine--glycine ligase from Rhizobium meliloti (strain 1021) (Ensifer meliloti).